We begin with the raw amino-acid sequence, 308 residues long: Extended-spectrum beta-lactamase PER-1 (308 aa).

The first 26 residues, 1–26 (MNVIIKAVVTASTLLMVSFSSFETSA), serve as a signal peptide directing secretion. Ser71 (nucleophile; acyl-ester intermediate) is an active-site residue. 3 residues coordinate a beta-lactam: Lys74, Ser135, and Glu171.

The protein belongs to the class-A beta-lactamase family. In terms of assembly, monomer.

The protein localises to the secreted. It carries out the reaction a beta-lactam + H2O = a substituted beta-amino acid. Inhibited by the beta-lactamase-blocking agents clavulanic acid, tazobactam and sulbactam. Not inhibited by EDTA. Extended-spectrum beta-lactamase (ESBL) which confers resistance to penicillins, as well as first-, second- and third-generation cephalosporins, but not the carbapenem, imipenem, in the JM109 strain of E.coli. Has cefotaxime-hydrolyzing activity. This is Extended-spectrum beta-lactamase PER-1 from Pseudomonas aeruginosa.